The chain runs to 153 residues: Ribonuclease K3 (153 aa).

The signal sequence occupies residues 1-26 (MGPDLRCFPLLLLLLGLWWSVRPLCA). A glycan (N-linked (GlcNAc...) asparagine) is linked at asparagine 30. The Proton acceptor role is filled by histidine 41. 4 disulfides stabilise this stretch: cysteine 49–cysteine 107, cysteine 63–cysteine 117, cysteine 81–cysteine 132, and cysteine 88–cysteine 95. Asparagine 58 is a glycosylation site (N-linked (GlcNAc...) asparagine). 64–68 (KPQNT) lines the substrate pocket. Asparagine 85 is a glycosylation site (N-linked (GlcNAc...) asparagine). Residue lysine 89 coordinates substrate. The active-site Proton donor is the histidine 148.

Belongs to the pancreatic ribonuclease family. Interacts (via N-terminus) with bacterial lipopolysaccharide (LPS). In terms of tissue distribution, kidney.

Its subcellular location is the secreted. It localises to the lysosome. The protein resides in the cytoplasmic granule. Functionally, ribonuclease which shows a preference for the pyrimidines uridine and cytosine. Has potent antibacterial activity against a range of Gram-positive and Gram-negative bacteria, including P.aeruginosa, A.baumanii, M.luteus, S.aureus, E.faecalis, E.faecium, S.saprophyticus and E.coli. Causes loss of bacterial membrane integrity, and also promotes agglutination of Gram-negative bacteria. Probably contributes to urinary tract sterility. Bactericidal activity is independent of RNase activity. The sequence is that of Ribonuclease K3 (RNASE6) from Sus scrofa (Pig).